A 213-amino-acid chain; its full sequence is Mite allergen Der f 7 (213 aa).

An N-terminal signal peptide occupies residues 1–17; the sequence is MMKFLLIAAVAFVAVSA. Asparagine 151 carries N-linked (GlcNAc...) asparagine glycosylation.

This sequence belongs to the mite group 7 allergen family.

It localises to the secreted. The chain is Mite allergen Der f 7 (DERF7) from Dermatophagoides farinae (American house dust mite).